We begin with the raw amino-acid sequence, 244 residues long: Probable phosphatase NT01CX_1282 (244 aa).

Residues His8, His10, His16, His41, Glu74, His102, His132, Asp193, and His195 each contribute to the Zn(2+) site.

It belongs to the PHP family. Requires Zn(2+) as cofactor.

The sequence is that of Probable phosphatase NT01CX_1282 from Clostridium novyi (strain NT).